The sequence spans 311 residues: 4-hydroxy-tetrahydrodipicolinate synthase (311 aa).

Threonine 51 is a pyruvate binding site. The Proton donor/acceptor role is filled by tyrosine 140. Catalysis depends on lysine 168, which acts as the Schiff-base intermediate with substrate. Isoleucine 209 provides a ligand contact to pyruvate.

Belongs to the DapA family. In terms of assembly, homotetramer; dimer of dimers.

It localises to the cytoplasm. It catalyses the reaction L-aspartate 4-semialdehyde + pyruvate = (2S,4S)-4-hydroxy-2,3,4,5-tetrahydrodipicolinate + H2O + H(+). The protein operates within amino-acid biosynthesis; L-lysine biosynthesis via DAP pathway; (S)-tetrahydrodipicolinate from L-aspartate: step 3/4. Functionally, catalyzes the condensation of (S)-aspartate-beta-semialdehyde [(S)-ASA] and pyruvate to 4-hydroxy-tetrahydrodipicolinate (HTPA). This is 4-hydroxy-tetrahydrodipicolinate synthase from Streptococcus pneumoniae (strain CGSP14).